Here is a 224-residue protein sequence, read N- to C-terminus: 7-cyano-7-deazaguanine synthase (224 aa).

9–19 (ISGGMDSTLCA) is a binding site for ATP. Residues Cys-190, Cys-198, Cys-201, and Cys-204 each coordinate Zn(2+).

The protein belongs to the QueC family. The cofactor is Zn(2+).

It carries out the reaction 7-carboxy-7-deazaguanine + NH4(+) + ATP = 7-cyano-7-deazaguanine + ADP + phosphate + H2O + H(+). It participates in purine metabolism; 7-cyano-7-deazaguanine biosynthesis. Functionally, catalyzes the ATP-dependent conversion of 7-carboxy-7-deazaguanine (CDG) to 7-cyano-7-deazaguanine (preQ(0)). The chain is 7-cyano-7-deazaguanine synthase from Campylobacter jejuni subsp. doylei (strain ATCC BAA-1458 / RM4099 / 269.97).